A 352-amino-acid polypeptide reads, in one-letter code: Outer membrane protein assembly factor BamC (352 aa).

The signal sequence occupies residues 1 to 19; that stretch reads MQYWIPKALAVSVLVSLSG. C20 carries the N-palmitoyl cysteine lipid modification. C20 is lipidated: S-diacylglycerol cysteine.

It belongs to the BamC family. In terms of assembly, part of the Bam complex.

Its subcellular location is the cell outer membrane. Part of the outer membrane protein assembly complex, which is involved in assembly and insertion of beta-barrel proteins into the outer membrane. This is Outer membrane protein assembly factor BamC from Pseudoalteromonas sp. (strain SM9913).